Consider the following 468-residue polypeptide: Aspartate ammonia-lyase (468 aa).

Residues Thr99, Ser138, Thr139, Asn140, and Thr185 each contribute to the L-aspartate site. The tract at residues 315-324 (GSSIMPGKVN) is SS loop. Ser316 serves as the catalytic Proton acceptor. Residues Ser317 and Lys322 each contribute to the L-aspartate site.

The protein belongs to the class-II fumarase/aspartase family. Aspartase subfamily. Homotetramer.

It carries out the reaction L-aspartate = fumarate + NH4(+). Its function is as follows. Catalyzes the reversible conversion of L-aspartate to fumarate and ammonia. The chain is Aspartate ammonia-lyase (aspA) from Helicobacter pylori (strain J99 / ATCC 700824) (Campylobacter pylori J99).